Reading from the N-terminus, the 469-residue chain is ATP-dependent protease ATPase subunit HslU (469 aa).

Residues I24 and 66 to 71 (GVGKTE) contribute to the ATP site. The segment at 159–179 (LFGSMNQPDEPAEEEVDQELK) is disordered. The ATP site is built by D282, E347, and R419.

It belongs to the ClpX chaperone family. HslU subfamily. In terms of assembly, a double ring-shaped homohexamer of HslV is capped on each side by a ring-shaped HslU homohexamer. The assembly of the HslU/HslV complex is dependent on binding of ATP.

The protein resides in the cytoplasm. Its function is as follows. ATPase subunit of a proteasome-like degradation complex; this subunit has chaperone activity. The binding of ATP and its subsequent hydrolysis by HslU are essential for unfolding of protein substrates subsequently hydrolyzed by HslV. HslU recognizes the N-terminal part of its protein substrates and unfolds these before they are guided to HslV for hydrolysis. The protein is ATP-dependent protease ATPase subunit HslU of Listeria innocua serovar 6a (strain ATCC BAA-680 / CLIP 11262).